Here is a 1069-residue protein sequence, read N- to C-terminus: Carbamoyl phosphate synthase large chain (1069 aa).

Residues 1–401 (MPLNKDIKKV…AFLKGIRSLE (401 aa)) are carboxyphosphate synthetic domain. Positions 129, 169, 175, 176, 208, 210, 215, 241, 242, 243, 284, and 298 each coordinate ATP. Residues 133–327 (RDMMNRIGEP…IAKLAAKIAL (195 aa)) enclose the ATP-grasp 1 domain. The Mg(2+) site is built by Gln-284, Glu-298, and Asn-300. Residues Gln-284, Glu-298, and Asn-300 each contribute to the Mn(2+) site. The segment at 402-549 (IGKYSLDHNK…YSTYEQYDEV (148 aa)) is oligomerization domain. Positions 550–932 (EVSNNKKVIV…ALYKGFVGAY (383 aa)) are carbamoyl phosphate synthetic domain. Residues 674–864 (DELLERLGIS…IVDLATQVML (191 aa)) form the ATP-grasp 2 domain. Residues Arg-710, Lys-749, Leu-751, Glu-755, Gly-780, Val-781, His-782, Ser-783, Gln-823, and Glu-835 each contribute to the ATP site. The Mg(2+) site is built by Gln-823, Glu-835, and Asn-837. Residues Gln-823, Glu-835, and Asn-837 each contribute to the Mn(2+) site. In terms of domain architecture, MGS-like spans 932–1069 (YMYPSKEKGK…KDLEVFNIAK (138 aa)). Positions 933 to 1069 (MYPSKEKGKI…KDLEVFNIAK (137 aa)) are allosteric domain.

This sequence belongs to the CarB family. In terms of assembly, composed of two chains; the small (or glutamine) chain promotes the hydrolysis of glutamine to ammonia, which is used by the large (or ammonia) chain to synthesize carbamoyl phosphate. Tetramer of heterodimers (alpha,beta)4. Requires Mg(2+) as cofactor. Mn(2+) is required as a cofactor.

It carries out the reaction hydrogencarbonate + L-glutamine + 2 ATP + H2O = carbamoyl phosphate + L-glutamate + 2 ADP + phosphate + 2 H(+). The enzyme catalyses hydrogencarbonate + NH4(+) + 2 ATP = carbamoyl phosphate + 2 ADP + phosphate + 2 H(+). It participates in amino-acid biosynthesis; L-arginine biosynthesis; carbamoyl phosphate from bicarbonate: step 1/1. Its pathway is pyrimidine metabolism; UMP biosynthesis via de novo pathway; (S)-dihydroorotate from bicarbonate: step 1/3. Functionally, large subunit of the glutamine-dependent carbamoyl phosphate synthetase (CPSase). CPSase catalyzes the formation of carbamoyl phosphate from the ammonia moiety of glutamine, carbonate, and phosphate donated by ATP, constituting the first step of 2 biosynthetic pathways, one leading to arginine and/or urea and the other to pyrimidine nucleotides. The large subunit (synthetase) binds the substrates ammonia (free or transferred from glutamine from the small subunit), hydrogencarbonate and ATP and carries out an ATP-coupled ligase reaction, activating hydrogencarbonate by forming carboxy phosphate which reacts with ammonia to form carbamoyl phosphate. This is Carbamoyl phosphate synthase large chain from Clostridium beijerinckii (strain ATCC 51743 / NCIMB 8052) (Clostridium acetobutylicum).